A 409-amino-acid chain; its full sequence is Arginine biosynthesis bifunctional protein ArgJ (409 aa).

T156, K182, T193, E280, N404, and S409 together coordinate substrate. T193 serves as the catalytic Nucleophile.

Belongs to the ArgJ family. Heterotetramer of two alpha and two beta chains.

Its subcellular location is the cytoplasm. The catalysed reaction is N(2)-acetyl-L-ornithine + L-glutamate = N-acetyl-L-glutamate + L-ornithine. The enzyme catalyses L-glutamate + acetyl-CoA = N-acetyl-L-glutamate + CoA + H(+). The protein operates within amino-acid biosynthesis; L-arginine biosynthesis; L-ornithine and N-acetyl-L-glutamate from L-glutamate and N(2)-acetyl-L-ornithine (cyclic): step 1/1. It functions in the pathway amino-acid biosynthesis; L-arginine biosynthesis; N(2)-acetyl-L-ornithine from L-glutamate: step 1/4. In terms of biological role, catalyzes two activities which are involved in the cyclic version of arginine biosynthesis: the synthesis of N-acetylglutamate from glutamate and acetyl-CoA as the acetyl donor, and of ornithine by transacetylation between N(2)-acetylornithine and glutamate. The sequence is that of Arginine biosynthesis bifunctional protein ArgJ from Nitrosomonas europaea (strain ATCC 19718 / CIP 103999 / KCTC 2705 / NBRC 14298).